Reading from the N-terminus, the 156-residue chain is Myosin regulatory light chain, striated adductor muscle (156 aa).

The residue at position 1 (Ala-1) is a Blocked amino end (Ala). EF-hand domains are found at residues 15-50 and 84-119; these read KQIQ…LGRT and DSEE…MGDN. Ca(2+)-binding residues include Asp-28, Asp-30, Asp-32, and Asp-39.

In molluscan muscle, calcium regulation is associated with myosin rather than with actin. Muscle myosin contains two types of light chains: the catalytic light chain, essential for ATPase activity, and the regulatory light chain, a calcium-binding protein responsible for Ca(2+) dependent binding and Ca(2+) dependent Mg-ATPase activity. This Chlamys nipponensis akazara (Akazara scallop) protein is Myosin regulatory light chain, striated adductor muscle.